Here is a 69-residue protein sequence, read N- to C-terminus: FXYD domain-containing ion transport regulator 11 (69 aa).

Positions 1–22 are cleaved as a signal peptide; that stretch reads MSQLTELVLLTVFLALFSRAEA. Residues 23-33 lie on the Extracellular side of the membrane; that stretch reads NPFVYNYEALR. Residues 34–54 form a helical membrane-spanning segment; it reads IGGLVFTCVLVAGAVTALCWG. Residues 55–69 are Cytoplasmic-facing; sequence QCKPKRKHDDDASKI.

It belongs to the FXYD family. As to expression, detected in adult gill and in larval skin at 2 days post-fertilization (at protein level). In adult gill, strong expression is found in the basal regions of the secondary lamellae.

Its subcellular location is the cell membrane. In terms of biological role, may modulate the activity of a sodium/potassium-transporting ATPase. This chain is FXYD domain-containing ion transport regulator 11, found in Danio rerio (Zebrafish).